A 166-amino-acid chain; its full sequence is NAD(P)H-quinone oxidoreductase subunit I, chloroplastic (166 aa).

4Fe-4S ferredoxin-type domains are found at residues 55–84 and 95–124; these read GRIH…VDWQ and VNYS…MTEE. [4Fe-4S] cluster-binding residues include Cys-64, Cys-67, Cys-70, Cys-74, Cys-104, Cys-107, Cys-110, and Cys-114.

This sequence belongs to the complex I 23 kDa subunit family. NDH is composed of at least 16 different subunits, 5 of which are encoded in the nucleus. The cofactor is [4Fe-4S] cluster.

The protein resides in the plastid. The protein localises to the chloroplast thylakoid membrane. The enzyme catalyses a plastoquinone + NADH + (n+1) H(+)(in) = a plastoquinol + NAD(+) + n H(+)(out). It catalyses the reaction a plastoquinone + NADPH + (n+1) H(+)(in) = a plastoquinol + NADP(+) + n H(+)(out). Functionally, NDH shuttles electrons from NAD(P)H:plastoquinone, via FMN and iron-sulfur (Fe-S) centers, to quinones in the photosynthetic chain and possibly in a chloroplast respiratory chain. The immediate electron acceptor for the enzyme in this species is believed to be plastoquinone. Couples the redox reaction to proton translocation, and thus conserves the redox energy in a proton gradient. In Coreopsis petrophiloides (Tickseed), this protein is NAD(P)H-quinone oxidoreductase subunit I, chloroplastic.